The following is a 185-amino-acid chain: Ribosome-recycling factor (185 aa).

This sequence belongs to the RRF family.

The protein resides in the cytoplasm. Functionally, responsible for the release of ribosomes from messenger RNA at the termination of protein biosynthesis. May increase the efficiency of translation by recycling ribosomes from one round of translation to another. This is Ribosome-recycling factor from Helicobacter hepaticus (strain ATCC 51449 / 3B1).